The following is a 464-amino-acid chain: Soluble pyridine nucleotide transhydrogenase (464 aa).

Residue 35–44 (DDRPQVGGNC) coordinates FAD.

The protein belongs to the class-I pyridine nucleotide-disulfide oxidoreductase family. The cofactor is FAD.

The protein localises to the cytoplasm. It catalyses the reaction NAD(+) + NADPH = NADH + NADP(+). In terms of biological role, conversion of NADPH, generated by peripheral catabolic pathways, to NADH, which can enter the respiratory chain for energy generation. The sequence is that of Soluble pyridine nucleotide transhydrogenase from Azotobacter vinelandii (strain DJ / ATCC BAA-1303).